The primary structure comprises 156 residues: Small ribosomal subunit protein uS7 (156 aa).

It belongs to the universal ribosomal protein uS7 family. Part of the 30S ribosomal subunit. Contacts proteins S9 and S11.

Functionally, one of the primary rRNA binding proteins, it binds directly to 16S rRNA where it nucleates assembly of the head domain of the 30S subunit. Is located at the subunit interface close to the decoding center, probably blocks exit of the E-site tRNA. The polypeptide is Small ribosomal subunit protein uS7 (Mycolicibacterium smegmatis (strain ATCC 700084 / mc(2)155) (Mycobacterium smegmatis)).